The primary structure comprises 196 residues: Large ribosomal subunit protein uL5 (196 aa).

Belongs to the universal ribosomal protein uL5 family. Part of the 50S ribosomal subunit; part of the 5S rRNA/L5/L18/L25 subcomplex. Contacts the 5S rRNA and the P site tRNA. Forms a bridge to the 30S subunit in the 70S ribosome.

This is one of the proteins that bind and probably mediate the attachment of the 5S RNA into the large ribosomal subunit, where it forms part of the central protuberance. In the 70S ribosome it contacts protein S13 of the 30S subunit (bridge B1b), connecting the 2 subunits; this bridge is implicated in subunit movement. Contacts the P site tRNA; the 5S rRNA and some of its associated proteins might help stabilize positioning of ribosome-bound tRNAs. This Acidothermus cellulolyticus (strain ATCC 43068 / DSM 8971 / 11B) protein is Large ribosomal subunit protein uL5.